A 357-amino-acid chain; its full sequence is MGRVEDQIKDNYNSLSHEGERLNREAKIESEKLKNNAKLDAKDMKKDIDESVHSSWETVKEGAKTVQDYISSGIESVKHTITTEPAQKDMENLKHNVNHNLEEAEKEGSSVLNNISNFFKGSAEEAKSEAERIGYEAYKDGDQFVGDVHKNFKRTANETQKDANRLTSDVKNESNKIYKDIKDESNKLYNDVKGESSKIYNGAKKEGSKLATDLKKDTQYVADETKKMAADLKNKAADTYQDLSHDASKKATQLKKKASETLDESADAIEHQFDIMKKDFRHLNQRNGMIWGSIGLIGGATATSYLFPSASPMAKFTFIAGLASLGGYYGLHQPHNKIVDNAFHKANNKKEELKKKI.

The interval 1-29 is disordered; the sequence is MGRVEDQIKDNYNSLSHEGERLNREAKIE. Positions 5-51 form a coiled coil; sequence EDQIKDNYNSLSHEGERLNREAKIESEKLKNNAKLDAKDMKKDIDES. Basic and acidic residues predominate over residues 17–29; the sequence is HEGERLNREAKIE. 3 N-linked (GlcNAc...) asparagine glycosylation sites follow: asparagine 114, asparagine 157, and asparagine 172. Coiled coils occupy residues 150–177 and 223–270; these read KNFK…SNKI and DETK…DAIE. Residues 290–307 traverse the membrane as a helical segment; the sequence is IWGSIGLIGGATATSYLF.

It is found in the membrane. This chain is SrfA-induced gene J protein (sigJ), found in Dictyostelium discoideum (Social amoeba).